Consider the following 960-residue polypeptide: Protein mono-ADP-ribosyltransferase PARP10 (960 aa).

Residue glutamate 103 is modified to ADP-ribosyl glutamic acid. A compositionally biased stretch (polar residues) spans 325–341 (SMGSTSPVDPVESSTEL). The interval 325–346 (SMGSTSPVDPVESSTELPEQVG) is disordered. Residues serine 381 and serine 388 each carry the phosphoserine modification. Residues 553 to 576 (SPHGGEDRVPLEMEKEKPGGPGET) are disordered. Over residues 555–570 (HGGEDRVPLEMEKEKP) the composition is skewed to basic and acidic residues. The Ubiquitin-interacting signature appears at 604 to 621 (LEEEATLQLAIHRSLESQ). A Phosphoserine modification is found at serine 617. The segment at 649 to 856 (DEDTGGEAQL…CAHGFNRSFC (208 aa)) is myc binding. One can recognise a PARP catalytic domain in the interval 755-960 (PNLSEQGLKE…TCKNILPGTP (206 aa)). The short motif at 780–787 (QDVVRAFY) is the PIP-box element. The residue at position 831 (glutamate 831) is an ADP-ribosyl glutamic acid.

The protein belongs to the ARTD/PARP family. As to quaternary structure, interacts with MYC. Interacts with PARP14. Interacts (via-PIP box and ubiquitin-interacting motifs) with PCNA. Post-translationally, stimulated through its phosphorylation by CDK2. Acquires CDK-dependent phosphorylation through late-G1 to S phase, and from prometaphase to cytokinesis in the nucleolar organizing regions. Phosphorylation is suppressed in growth-arrested cells. In terms of processing, auto-mono-ADP-ribosylated on glutamate and lysine residues.

Its subcellular location is the cytoplasm. It localises to the nucleus. The catalysed reaction is L-lysyl-[protein] + NAD(+) = N(6)-(ADP-D-ribosyl)-L-lysyl-[protein] + nicotinamide + H(+). It catalyses the reaction L-aspartyl-[protein] + NAD(+) = 4-O-(ADP-D-ribosyl)-L-aspartyl-[protein] + nicotinamide. It carries out the reaction L-glutamyl-[protein] + NAD(+) = 5-O-(ADP-D-ribosyl)-L-glutamyl-[protein] + nicotinamide. ADP-ribosyltransferase that mediates mono-ADP-ribosylation of glutamate and aspartate residues on target proteins. In contrast to PARP1 and PARP2, it is not able to mediate poly-ADP-ribosylation. Catalyzes mono-ADP-ribosylation of GSK3B, leading to negatively regulate GSK3B kinase activity. Involved in translesion DNA synthesis in response to DNA damage via its interaction with PCNA. This chain is Protein mono-ADP-ribosyltransferase PARP10, found in Mus musculus (Mouse).